We begin with the raw amino-acid sequence, 343 residues long: D-beta-hydroxybutyrate dehydrogenase, mitochondrial (343 aa).

A mitochondrion-targeting transit peptide spans 1–46 (MLAARLSRPLSQLPGKALSVCDRENGTRHTLLFYPASFSPDTRRTY). Residue 59-83 (LVTGCDSGFGFSLAKHLHSKGFLVF) participates in NAD(+) binding. An N6-acetyllysine modification is found at lysine 73. At lysine 103 the chain carries N6-acetyllysine; alternate. Lysine 103 is subject to N6-succinyllysine; alternate. N6-acetyllysine occurs at positions 132 and 177. Position 195 (serine 195) interacts with substrate. The active-site Proton acceptor is tyrosine 208. The residue at position 212 (lysine 212) is an N6-acetyllysine. O-linked (GlcNAc) serine glycosylation occurs at serine 219. Residue serine 246 is modified to Phosphoserine. An N6-acetyllysine modification is found at lysine 258. Residue lysine 259 is modified to N6-acetyllysine; alternate. Position 259 is an N6-succinyllysine; alternate (lysine 259). Lysine 280 carries the post-translational modification N6-acetyllysine.

It belongs to the short-chain dehydrogenases/reductases (SDR) family. Homotetramer. Expressed in liver.

The protein resides in the mitochondrion inner membrane. It is found in the mitochondrion matrix. The enzyme catalyses (R)-3-hydroxybutanoate + NAD(+) = acetoacetate + NADH + H(+). With respect to regulation, requires phosphatidylcholine as an allosteric activator for enzymatic activity. The polypeptide is D-beta-hydroxybutyrate dehydrogenase, mitochondrial (Rattus norvegicus (Rat)).